Consider the following 575-residue polypeptide: Acetolactate synthase large subunit (575 aa).

E57 is a binding site for thiamine diphosphate. FAD-binding positions include R159, 265–286 (HGSY…LGSR), and 308–327 (DIDA…ILSD). Residues 395 to 475 (QHQMWVAQYY…IKVVLINNHS (81 aa)) are thiamine pyrophosphate binding. Residues D446 and N473 each coordinate Mg(2+).

Belongs to the TPP enzyme family. In terms of assembly, dimer of large and small chains. The cofactor is Mg(2+). Thiamine diphosphate serves as cofactor.

The enzyme catalyses 2 pyruvate + H(+) = (2S)-2-acetolactate + CO2. The protein operates within amino-acid biosynthesis; L-isoleucine biosynthesis; L-isoleucine from 2-oxobutanoate: step 1/4. It functions in the pathway amino-acid biosynthesis; L-valine biosynthesis; L-valine from pyruvate: step 1/4. The chain is Acetolactate synthase large subunit (ilvB) from Lactococcus lactis subsp. lactis (strain IL1403) (Streptococcus lactis).